A 473-amino-acid chain; its full sequence is LEC14B protein (473 aa).

WD repeat units lie at residues 212–242, 254–285, 301–331, 377–413, and 425–455; these read GYSF…CVYD, AHES…KVWD, GHLE…KLWD, GHSV…YIYD, and YHKA…VKWE.

It belongs to the WD repeat LEC14B family.

This Lithospermum erythrorhizon (Purple gromwell) protein is LEC14B protein.